Here is a 647-residue protein sequence, read N- to C-terminus: DNA ligase (647 aa).

Residues 30-34 (DEEYD), 79-80 (SM), and glutamate 106 contribute to the NAD(+) site. The active-site N6-AMP-lysine intermediate is lysine 108. Positions 129, 163, and 301 each coordinate NAD(+). Zn(2+) contacts are provided by cysteine 395, cysteine 398, cysteine 411, and cysteine 416. The region spanning 569–647 (SISNALSGKT…SEYERLKLEV (79 aa)) is the BRCT domain.

It belongs to the NAD-dependent DNA ligase family. LigA subfamily. Mg(2+) is required as a cofactor. It depends on Mn(2+) as a cofactor.

The enzyme catalyses NAD(+) + (deoxyribonucleotide)n-3'-hydroxyl + 5'-phospho-(deoxyribonucleotide)m = (deoxyribonucleotide)n+m + AMP + beta-nicotinamide D-nucleotide.. Functionally, DNA ligase that catalyzes the formation of phosphodiester linkages between 5'-phosphoryl and 3'-hydroxyl groups in double-stranded DNA using NAD as a coenzyme and as the energy source for the reaction. It is essential for DNA replication and repair of damaged DNA. This Campylobacter concisus (strain 13826) protein is DNA ligase.